A 620-amino-acid chain; its full sequence is Chaperone protein HscA homolog (620 aa).

It belongs to the heat shock protein 70 family.

Its function is as follows. Chaperone involved in the maturation of iron-sulfur cluster-containing proteins. Has a low intrinsic ATPase activity which is markedly stimulated by HscB. This Neisseria meningitidis serogroup A / serotype 4A (strain DSM 15465 / Z2491) protein is Chaperone protein HscA homolog.